A 156-amino-acid polypeptide reads, in one-letter code: Large ribosomal subunit protein uL15 (156 aa).

Residues 26-46 form a disordered region; it reads GIGCGKGKTSGRGHKGQKARS. Residues 34–43 show a composition bias toward basic residues; sequence TSGRGHKGQK.

The protein belongs to the universal ribosomal protein uL15 family. In terms of assembly, part of the 50S ribosomal subunit.

Functionally, binds to the 23S rRNA. The protein is Large ribosomal subunit protein uL15 of Ehrlichia canis (strain Jake).